A 176-amino-acid polypeptide reads, in one-letter code: ATP-dependent protease subunit HslV (176 aa).

Thr2 is a catalytic residue. 3 residues coordinate Na(+): Gly157, Cys160, and Thr163.

This sequence belongs to the peptidase T1B family. HslV subfamily. In terms of assembly, a double ring-shaped homohexamer of HslV is capped on each side by a ring-shaped HslU homohexamer. The assembly of the HslU/HslV complex is dependent on binding of ATP.

The protein localises to the cytoplasm. The enzyme catalyses ATP-dependent cleavage of peptide bonds with broad specificity.. With respect to regulation, allosterically activated by HslU binding. Protease subunit of a proteasome-like degradation complex believed to be a general protein degrading machinery. The sequence is that of ATP-dependent protease subunit HslV from Pseudomonas savastanoi pv. phaseolicola (strain 1448A / Race 6) (Pseudomonas syringae pv. phaseolicola (strain 1448A / Race 6)).